Reading from the N-terminus, the 198-residue chain is Nucleoside triphosphate pyrophosphatase (198 aa).

The active-site Proton acceptor is the D72.

This sequence belongs to the Maf family. A divalent metal cation serves as cofactor.

The protein resides in the cytoplasm. The catalysed reaction is a ribonucleoside 5'-triphosphate + H2O = a ribonucleoside 5'-phosphate + diphosphate + H(+). It carries out the reaction a 2'-deoxyribonucleoside 5'-triphosphate + H2O = a 2'-deoxyribonucleoside 5'-phosphate + diphosphate + H(+). In terms of biological role, nucleoside triphosphate pyrophosphatase. May have a dual role in cell division arrest and in preventing the incorporation of modified nucleotides into cellular nucleic acids. This is Nucleoside triphosphate pyrophosphatase from Acinetobacter baylyi (strain ATCC 33305 / BD413 / ADP1).